The chain runs to 666 residues: ATP-dependent zinc metalloprotease FtsH (666 aa).

The Cytoplasmic segment spans residues 1-6 (MKSETG). The chain crosses the membrane as a helical span at residues 7 to 27 (YMGFVVVLVFMVLLALQLATL). Residues 28–116 (SAPATQIAYS…TRYRGADDDT (89 aa)) lie on the Periplasmic side of the membrane. A helical transmembrane segment spans residues 117–137 (WIGTLASWIVPIAVFALVWNL). The Cytoplasmic segment spans residues 138–666 (MLRRPRGGLQ…ADNADHSVPQ (529 aa)). 210-217 (GAPGTGKT) is a binding site for ATP. His432 provides a ligand contact to Zn(2+). The active site involves Glu433. His436 and Asp509 together coordinate Zn(2+). The disordered stretch occupies residues 612–666 (NDEPTPEPGARDPGGDAAKRSGIGAAPAKPPAEVGSAELRDPARKADNADHSVPQ). 2 stretches are compositionally biased toward basic and acidic residues: residues 620–630 (GARDPGGDAAK) and 649–666 (ELRD…SVPQ).

In the central section; belongs to the AAA ATPase family. This sequence in the C-terminal section; belongs to the peptidase M41 family. As to quaternary structure, homohexamer. Requires Zn(2+) as cofactor.

It localises to the cell inner membrane. Its function is as follows. Acts as a processive, ATP-dependent zinc metallopeptidase for both cytoplasmic and membrane proteins. Plays a role in the quality control of integral membrane proteins. The chain is ATP-dependent zinc metalloprotease FtsH from Burkholderia pseudomallei (strain 1710b).